A 386-amino-acid chain; its full sequence is Short integuments 2, mitochondrial (386 aa).

In terms of domain architecture, CP-type G spans 37–207; that stretch reads TRAIRNRLKL…VLDSPGVLVP (171 aa). Positions 55–59 match the DARXP motif motif; it reads DARIP. A G4 region spans residues 81–84; the sequence is NKKD. Residues 81–84, 109–110, and 146–151 contribute to the GTP site; these read NKKD, NA, and NVGKSA. The G5 stretch occupies residues 109–111; sequence NAH. Residues 143 to 150 form a G1 region; the sequence is GVPNVGKS. Residues 180 to 184 are G2; it reads GVTQD. A G3 region spans residues 200 to 203; it reads DSPG. Position 203 (Gly-203) interacts with GTP.

It belongs to the TRAFAC class YlqF/YawG GTPase family. MTG1 subfamily. As to expression, expressed in seedlings, roots, leaves, stems, inflorescences and siliques.

It is found in the mitochondrion. GTPase that may function in mitochondrial ribosome assembly. Involved in a variety of growth processes during vegetative development and promotes growth and cell division in the developing integuments. The polypeptide is Short integuments 2, mitochondrial (Arabidopsis thaliana (Mouse-ear cress)).